The primary structure comprises 439 residues: Homogentisate 1,2-dioxygenase (439 aa).

Residue histidine 289 is the Proton acceptor of the active site. Histidine 332 and glutamate 338 together coordinate Fe cation. The homogentisate site is built by tyrosine 347 and histidine 368. Residue histidine 368 participates in Fe cation binding.

Belongs to the homogentisate dioxygenase family. As to quaternary structure, hexamer; dimer of trimers. Fe cation is required as a cofactor.

The enzyme catalyses homogentisate + O2 = 4-maleylacetoacetate + H(+). It functions in the pathway amino-acid degradation; L-phenylalanine degradation; acetoacetate and fumarate from L-phenylalanine: step 4/6. Involved in the catabolism of homogentisate (2,5-dihydroxyphenylacetate or 2,5-OH-PhAc), a central intermediate in the degradation of phenylalanine and tyrosine. Catalyzes the oxidative ring cleavage of the aromatic ring of homogentisate to yield maleylacetoacetate. This Xanthomonas euvesicatoria pv. vesicatoria (strain 85-10) (Xanthomonas campestris pv. vesicatoria) protein is Homogentisate 1,2-dioxygenase.